The following is a 501-amino-acid chain: MKFKADEISSIIKERIENFDLNLEIEETGKIISVADGVAKVYGLKNIMAGEMVEFENGDKGMALNLEESSVGIVILGKGEGLKEGASVKRLKKLLKVPVGEALIGRVVNALGEPIDAKGVINANEYRFVEEKAKGIMARKSVHEPLHTGIKAIDALVPIGRGQRELIIGDRQTGKTTVAVDTIISQRGQGVICIYVAIGQKQSTVAQVVKRLEEHGAMEYTIVVNAGASDPAALQYLAPYTGVTMGEFFRDNAKHALIVYDDLSKHAVAYREMSLILRRPPGREAYPGDVFYLHSRLLERASKLNDELGAGSLTALPIIETQAGDVSAYIPTNVISITDGQIFLETDLFNSGIRPAINVGLSVSRVGGAAQIKATKQVSGTLRLDLAQYRELQAFAQFASDLDEASRKQLERGQRMVELLKQPPYSPLSVEKQVVLIFAGTKGFLDDIAVSRIKEFEDGIYPFIEAKHPDIFEQIRSKKALDSDLEEKLAKAINEFKANHL.

169-176 (GDRQTGKT) contacts ATP.

This sequence belongs to the ATPase alpha/beta chains family. As to quaternary structure, F-type ATPases have 2 components, CF(1) - the catalytic core - and CF(0) - the membrane proton channel. CF(1) has five subunits: alpha(3), beta(3), gamma(1), delta(1), epsilon(1). CF(0) has three main subunits: a(1), b(2) and c(9-12). The alpha and beta chains form an alternating ring which encloses part of the gamma chain. CF(1) is attached to CF(0) by a central stalk formed by the gamma and epsilon chains, while a peripheral stalk is formed by the delta and b chains.

It is found in the cell inner membrane. It carries out the reaction ATP + H2O + 4 H(+)(in) = ADP + phosphate + 5 H(+)(out). Functionally, produces ATP from ADP in the presence of a proton gradient across the membrane. The alpha chain is a regulatory subunit. The chain is ATP synthase subunit alpha from Campylobacter jejuni subsp. jejuni serotype O:6 (strain 81116 / NCTC 11828).